Reading from the N-terminus, the 189-residue chain is Probable nicotinate-nucleotide adenylyltransferase (189 aa).

It belongs to the NadD family.

The catalysed reaction is nicotinate beta-D-ribonucleotide + ATP + H(+) = deamido-NAD(+) + diphosphate. Its pathway is cofactor biosynthesis; NAD(+) biosynthesis; deamido-NAD(+) from nicotinate D-ribonucleotide: step 1/1. Functionally, catalyzes the reversible adenylation of nicotinate mononucleotide (NaMN) to nicotinic acid adenine dinucleotide (NaAD). This chain is Probable nicotinate-nucleotide adenylyltransferase, found in Bacillus cereus (strain Q1).